The following is a 572-amino-acid chain: Na(+)/citrate cotransporter (572 aa).

Helical transmembrane passes span 13-33 (SFAI…LIPD), 53-73 (VIPV…LKVL), 80-100 (IQYM…AVAV), 124-144 (LMLG…NTAA), 218-238 (SASI…VLLG), 255-275 (SWFG…WLWL), 315-335 (SLSY…ILWF), and 357-377 (HITD…IPSQ). N382 carries an N-linked (GlcNAc...) asparagine glycan. The next 4 helical transmembrane spans lie at 410-430 (VPWD…GCET), 443-463 (PLRL…VAMT), 491-511 (PLYV…LPVA), and 532-552 (TGLI…NTWG). An N-linked (GlcNAc...) asparagine glycan is attached at N566.

Belongs to the SLC13A/DASS transporter (TC 2.A.47) family. NADC subfamily. In terms of assembly, homodimer.

Its subcellular location is the cell membrane. The catalysed reaction is citrate(out) + 4 Na(+)(out) = citrate(in) + 4 Na(+)(in). Inhibited by Li(+). Functionally, high-affinity sodium/citrate cotransporter that mediates citrate entry into cells, which is a critical participant of biochemical pathways. May function in various metabolic processes in which citrate has a critical role such as energy production (Krebs cycle), fatty acid synthesis, cholesterol synthesis, glycolysis, and gluconeogenesis. Transports citrate into the cell in a Na(+)-dependent manner, recognizing the trivalent form of citrate (physiological pH) rather than the divalent form. Can recognizes succinate as a substrate, but its affinity for succinate is several fold lower than for citrate. The stoichiometry is probably 4 Na(+) for each carboxylate, irrespective of whether the translocated substrate is divalent or trivalent, rendering the process electrogenic. Involved in the regulation of citrate levels in the brain. The polypeptide is Na(+)/citrate cotransporter (Slc13a5) (Mus musculus (Mouse)).